A 432-amino-acid polypeptide reads, in one-letter code: Polyadenylate-binding protein RBP47C (432 aa).

The tract at residues 1 to 55 is disordered; sequence MADVKIQSESESSDSHPVVDNQPPPPPPPPQQPAKEEENQPKTSPTPPPHWMRYP. The span at 22–32 shows a compositional bias: pro residues; that stretch reads QPPPPPPPPQQ. 2 RRM domains span residues 101–183 and 197–276; these read KTIW…WASF and LSIF…PATP. The tract at residues 271–293 is disordered; the sequence is IGPATPRKTNGYQQQGGYMPNGT. Polar residues predominate over residues 277 to 286; it reads RKTNGYQQQG. In terms of domain architecture, RRM 3 spans 304-376; the sequence is TTIFVGGLDS…QTVRLSWGRN (73 aa).

This sequence belongs to the polyadenylate-binding RBP47 family. As to quaternary structure, interacts with the poly(A) tail of mRNA in nucleus. Expressed in leaves, stems, flowers, and seedlings.

Its subcellular location is the nucleus. The protein resides in the cytoplasmic granule. Heterogeneous nuclear ribonucleoprotein (hnRNP)-protein binding the poly(A) tail of mRNA and probably involved in some steps of pre-mRNA maturation. This Arabidopsis thaliana (Mouse-ear cress) protein is Polyadenylate-binding protein RBP47C (RBP47C).